A 272-amino-acid polypeptide reads, in one-letter code: Ribonuclease HII (272 aa).

One can recognise an RNase H type-2 domain in the interval 87-272 (KYVAGVDEVG…HRMSFLKNIL (186 aa)). Positions 93, 94, and 188 each coordinate a divalent metal cation.

It belongs to the RNase HII family. It depends on Mn(2+) as a cofactor. Mg(2+) serves as cofactor.

The protein localises to the cytoplasm. The catalysed reaction is Endonucleolytic cleavage to 5'-phosphomonoester.. Functionally, endonuclease that specifically degrades the RNA of RNA-DNA hybrids. The polypeptide is Ribonuclease HII (Clostridium perfringens (strain SM101 / Type A)).